A 159-amino-acid chain; its full sequence is Crossover junction endodeoxyribonuclease RuvC (159 aa).

Active-site residues include Asp7, Glu67, and Asp139. Asp7, Glu67, and Asp139 together coordinate Mg(2+).

It belongs to the RuvC family. As to quaternary structure, homodimer which binds Holliday junction (HJ) DNA. The HJ becomes 2-fold symmetrical on binding to RuvC with unstacked arms; it has a different conformation from HJ DNA in complex with RuvA. In the full resolvosome a probable DNA-RuvA(4)-RuvB(12)-RuvC(2) complex forms which resolves the HJ. Mg(2+) serves as cofactor.

It is found in the cytoplasm. It catalyses the reaction Endonucleolytic cleavage at a junction such as a reciprocal single-stranded crossover between two homologous DNA duplexes (Holliday junction).. Its function is as follows. The RuvA-RuvB-RuvC complex processes Holliday junction (HJ) DNA during genetic recombination and DNA repair. Endonuclease that resolves HJ intermediates. Cleaves cruciform DNA by making single-stranded nicks across the HJ at symmetrical positions within the homologous arms, yielding a 5'-phosphate and a 3'-hydroxyl group; requires a central core of homology in the junction. The consensus cleavage sequence is 5'-(A/T)TT(C/G)-3'. Cleavage occurs on the 3'-side of the TT dinucleotide at the point of strand exchange. HJ branch migration catalyzed by RuvA-RuvB allows RuvC to scan DNA until it finds its consensus sequence, where it cleaves and resolves the cruciform DNA. The chain is Crossover junction endodeoxyribonuclease RuvC from Orientia tsutsugamushi (strain Ikeda) (Rickettsia tsutsugamushi).